Here is a 670-residue protein sequence, read N- to C-terminus: Solute carrier organic anion transporter family member 1A2 (670 aa).

Over 1 to 20 the chain is Cytoplasmic; sequence MGETEKRIETHRIRCLSKLK. Residues 21–40 form a helical membrane-spanning segment; it reads MFLLAITCAFVSKTLSGSYM. Over 41 to 59 the chain is Extracellular; sequence NSMLTQIERQFNIPTSLVG. The helical transmembrane segment at 60-80 threads the bilayer; it reads FINGSFEIGNLLLIIFVSYFG. At 81 to 86 the chain is on the cytoplasmic side; that stretch reads TKLHRP. Residues 87–111 traverse the membrane as a helical segment; the sequence is IMIGIGCVVMGLGCFLKSLPHFLMN. Residues 112–155 lie on the Extracellular side of the membrane; the sequence is QYEYESTVSVSGNLSSNSFLCMENGTQILRPTQDPSECTKEVKS. N-linked (GlcNAc...) asparagine glycans are attached at residues asparagine 124 and asparagine 135. A helical membrane pass occupies residues 156-184; sequence LMWVYVLVGNIVRGMGETPILPLGISYIE. At 185–203 the chain is on the cytoplasmic side; sequence DFAKFENSPLYIGLVETGA. A helical membrane pass occupies residues 204 to 224; that stretch reads IIGPLIGLLLASFCANVYVDT. The Extracellular segment spans residues 225-242; it reads GFVNTDDLIITPTDTRWV. A helical membrane pass occupies residues 243–267; it reads GAWWFGFLICAGVNVLTAIPFFFLP. Topologically, residues 268 to 311 are cytoplasmic; sequence NTLPKEGLETNADIIKNENEDKQKEEVKKEKYGITKDFLPFMKS. The helical transmembrane segment at 312–333 threads the bilayer; sequence LSCNPIYMLFILVSVIQFNAFV. Topologically, residues 334 to 353 are extracellular; that stretch reads NMISFMPKYLEQQYGISSSD. Residues 354–377 traverse the membrane as a helical segment; it reads AIFLMGIYNLPPICIGYIIGGLIM. Over 378-381 the chain is Cytoplasmic; sequence KKFK. A helical membrane pass occupies residues 382-405; that stretch reads ITVKQAAHIGCWLSLLEYLLYFLS. At 406-513 the chain is on the extracellular side; that stretch reads FLMTCENSSV…PDCSLMLQYF (108 aa). N-linked (GlcNAc...) asparagine glycans are attached at residues asparagine 412 and asparagine 419. The Kazal-like domain occupies 433–488; that stretch reads NDIFADCNVDCNCPSKIWDPVCGNNGLSYLSACLAGCETSIGTGINMVFQNCSCIQ. 3 cysteine pairs are disulfide-bonded: cysteine 439–cysteine 469, cysteine 445–cysteine 465, and cysteine 454–cysteine 486. Residues 514–536 traverse the membrane as a helical segment; sequence LILSAMSSFIYSLAAIPGYMVLL. Residues 537 to 545 are Cytoplasmic-facing; the sequence is RCMKSEEKS. The helical transmembrane segment at 546–571 threads the bilayer; the sequence is LGVGLHTFCTRVFAGIPAPIYFGALM. At 572–605 the chain is on the extracellular side; the sequence is DSTCLHWGTLKCGESGACRIYDSTTFRYIYLGLP. The helical transmembrane segment at 606-623 threads the bilayer; that stretch reads AALRGSSFVPALIILILL. At 624-670 the chain is on the cytoplasmic side; sequence RKCHLPGENASSGTELIETKVKGKENECKDIYQKSTVLKDDELKTKL.

The protein belongs to the organo anion transporter (TC 2.A.60) family. As to expression, higher expression in the brain than in liver and kidney. Expressed in brain neurons in both cortex and hippocampus. Expressed in placental trophoblasts. Also expressed in lung and testes at lower levels. Expressed in the eye (at protein level). Expressed in the retina in the outer and inner nuclear layers, the inner plexiform layer and the ganglion cell layer. Expressed in liver and prostate. In testis, primarily localized to the basal membrane of Sertoli cells and weakly expressed in Leydig cells and within the tubules. Expressed in fetal brain and liver.

The protein localises to the cell membrane. It localises to the basal cell membrane. It carries out the reaction taurocholate(out) = taurocholate(in). The catalysed reaction is glycocholate(out) = glycocholate(in). It catalyses the reaction taurochenodeoxycholate(out) = taurochenodeoxycholate(in). The enzyme catalyses tauroursodeoxycholate(out) = tauroursodeoxycholate(in). It carries out the reaction dehydroepiandrosterone 3-sulfate(out) = dehydroepiandrosterone 3-sulfate(in). The catalysed reaction is estrone 3-sulfate(out) = estrone 3-sulfate(in). It catalyses the reaction 3,3',5'-triiodo-L-thyronine(out) = 3,3',5'-triiodo-L-thyronine(in). The enzyme catalyses L-thyroxine(out) = L-thyroxine(in). It carries out the reaction taurodeoxycholate(out) = taurodeoxycholate(in). The catalysed reaction is glycodeoxycholate(out) = glycodeoxycholate(in). It catalyses the reaction glycochenodeoxycholate(out) = glycochenodeoxycholate(in). The enzyme catalyses glycoursodeoxycholate(out) = glycoursodeoxycholate(in). It carries out the reaction 17beta-estradiol 17-O-(beta-D-glucuronate)(out) = 17beta-estradiol 17-O-(beta-D-glucuronate)(in). The catalysed reaction is prostaglandin E2(out) = prostaglandin E2(in). It catalyses the reaction substance P(out) = substance P(in). Its activity is regulated as follows. Transport activity is inhibited by the grapefruit juice component naringin. In terms of biological role, na(+)-independent transporter that mediates the cellular uptake of a broad range of organic anions such as the endogenous bile salts cholate and deoxycholate, either in their unconjugated or conjugated forms (taurocholate and glycocholate), at the plasmam membrane. Responsible for intestinal absorption of bile acids. Transports dehydroepiandrosterone 3-sulfate (DHEAS), a major circulating steroid secreted by the adrenal cortex, as well as estrone 3-sulfate and 17beta-estradiol 17-O-(beta-D-glucuronate). Mediates apical uptake of all-trans-retinol (atROL) across human retinal pigment epithelium, which is essential to maintaining the integrity of the visual cycle and thus vision. Involved in the uptake of clinically used drugs. Capable of thyroid hormone transport (both T3 or 3,3',5'-triiodo-L-thyronine, and T4 or L-tyroxine). Also transports prostaglandin E2. Plays roles in blood-brain and -cerebrospinal fluid barrier transport of organic anions and signal mediators, and in hormone uptake by neural cells. May also play a role in the reuptake of neuropeptides such as substance P/TAC1 and vasoactive intestinal peptide/VIP released from retinal neurons. May play an important role in plasma and tissue distribution of the structurally diverse chemotherapeutic drugs methotrexate and paclitaxel. Shows a pH-sensitive substrate specificity which may be ascribed to the protonation state of the binding site and leads to a stimulation of substrate transport in an acidic microenvironment. Hydrogencarbonate/HCO3(-) acts as the probable counteranion that exchanges for organic anions. May contribute to regulate the transport of organic compounds in testis across the blood-testis-barrier. This is Solute carrier organic anion transporter family member 1A2 (SLCO1A2) from Homo sapiens (Human).